A 528-amino-acid polypeptide reads, in one-letter code: Peptide chain release factor 3 (528 aa).

The tr-type G domain maps to 11-279 (NKRRTFAIIS…GIVEWAPKPL (269 aa)). GTP contacts are provided by residues 20-27 (SHPDAGKT), 88-92 (DTPGH), and 142-145 (NKLD).

This sequence belongs to the TRAFAC class translation factor GTPase superfamily. Classic translation factor GTPase family. PrfC subfamily.

The protein resides in the cytoplasm. Increases the formation of ribosomal termination complexes and stimulates activities of RF-1 and RF-2. It binds guanine nucleotides and has strong preference for UGA stop codons. It may interact directly with the ribosome. The stimulation of RF-1 and RF-2 is significantly reduced by GTP and GDP, but not by GMP. The sequence is that of Peptide chain release factor 3 from Shewanella sp. (strain W3-18-1).